The following is a 434-amino-acid chain: Arrestin domain-containing protein 1 (434 aa).

Positions 295 to 345 are disordered; it reads PGPGSSPGLLSPVVPSAPPQEEAEAVASGPHFSDPVSLSTKSHSQQQPLST. The segment covering 330–342 has biased composition (polar residues); sequence VSLSTKSHSQQQP. Short sequence motifs (PPxY motif) lie at residues 401-404 and 414-417; these read PPEY and PPSY.

This sequence belongs to the arrestin family. As to quaternary structure, interacts (via PPxY motifs) with ITCH (via WW domains); the interaction is direct and participates in the recruitment of the ubiquitin-protein ligase ITCH to the NOTCH1 receptor. Interacts with ARRB1 and ARRB2; the interaction is direct. Interacts with TSG101; may recruit TSG101 to the plasma membrane. Interacts (via PPxY motifs) with WWP2 (via WW domains); ubiquitinates ARRDC1. Interacts with SLC11A2; controls the incorporation of SLC11A2 into extracellular vesicles through an ubiquitination-dependent mechanism. Interacts with WWP1 (via WW domains). Interacts with NEDD4 (via WW domains). Interacts with PDCD6IP. Post-translationally, ubiquitinated. Ubiquitination by WWP2; promotes localization to extracellular microvesicles. Ubiquitinated by WWP1.

It is found in the cell membrane. Functions as an adapter recruiting ubiquitin-protein ligases to their specific substrates. Through an ubiquitination-dependent mechanism plays for instance a role in the incorporation of SLC11A2 into extracellular vesicles. More generally, plays a role in the extracellular transport of proteins between cells through the release in the extracellular space of microvesicles. By participating in the ITCH-mediated ubiquitination and subsequent degradation of NOTCH1, negatively regulates the NOTCH signaling pathway. This Rattus norvegicus (Rat) protein is Arrestin domain-containing protein 1.